A 406-amino-acid chain; its full sequence is Vacuole membrane protein 1 (406 aa).

The residue at position 2 (Ala2) is an N-acetylalanine. The Cytoplasmic portion of the chain corresponds to 2-43 (AENGQNCDQRRVAMNKEQYNGNFTDPSSVNEKKRRDREERQN). The chain crosses the membrane as a helical span at residues 44–63 (IVLWRQPLITLQYFSLETLV). The Extracellular segment spans residues 64–77 (ILKEWTSKLWHRQS). A helical transmembrane segment spans residues 78–98 (IVVSFLLLLAVLTATYYVEGA). Residues 99 to 109 (HQQYVQRIEKQ) are Cytoplasmic-facing. The helical transmembrane segment at 110-130 (FLLYAYWIGLGILSSVGLGTG) threads the bilayer. Topologically, residues 131–250 (LHTFLLYLGP…ASRAKLAVQN (120 aa)) are extracellular. The VTT domain stretch occupies residues 173-316 (GTEGTISLWS…FVIVAFSKHI (144 aa)). A helical membrane pass occupies residues 251–271 (LVQKVGFFGILACASIPNPLF). The Cytoplasmic portion of the chain corresponds to 272-273 (DL). The chain crosses the membrane as a helical span at residues 274-294 (AGITCGHFLVPFWTFFGATLI). Over 295-306 (GKAIIKMHIQKL) the chain is Extracellular. The chain crosses the membrane as a helical span at residues 307–327 (FVIVAFSKHIVEQMVAFIGAV). The Cytoplasmic portion of the chain corresponds to 328 to 363 (PGIGPSLQKPFQEYLEAQRQKLHHRSEMGTPQGENW). A helical transmembrane segment spans residues 364 to 384 (LSWMFEKLVVVMVCYFILSII). Residues 385–406 (NSMAQSYAKRIQQRLDPKEKTK) lie on the Extracellular side of the membrane.

It belongs to the VMP1 family. In terms of assembly, interacts with BECN1. Interacts with TJP1. Interacts with TP53INP2. Interacts with TMEM41B. Interacts with ATP2A2, PLN and SLN; competes with PLN and SLN to prevent them from forming an inhibitory complex with ATP2A2. Interacts with ATG2A.

Its subcellular location is the endoplasmic reticulum-Golgi intermediate compartment membrane. It is found in the cell membrane. The protein localises to the vacuole membrane. It localises to the endoplasmic reticulum membrane. The enzyme catalyses a 1,2-diacyl-sn-glycero-3-phospho-L-serine(in) = a 1,2-diacyl-sn-glycero-3-phospho-L-serine(out). It carries out the reaction cholesterol(in) = cholesterol(out). The catalysed reaction is a 1,2-diacyl-sn-glycero-3-phosphocholine(in) = a 1,2-diacyl-sn-glycero-3-phosphocholine(out). It catalyses the reaction a 1,2-diacyl-sn-glycero-3-phosphoethanolamine(in) = a 1,2-diacyl-sn-glycero-3-phosphoethanolamine(out). Its function is as follows. Phospholipid scramblase involved in lipid homeostasis and membrane dynamics processes. Has phospholipid scramblase activity toward cholesterol and phosphatidylserine, as well as phosphatidylethanolamine and phosphatidylcholine. Required for autophagosome formation: participates in early stages of autophagosome biogenesis at the endoplasmic reticulum (ER) membrane by reequilibrating the leaflets of the ER as lipids are extracted by ATG2 (ATG2A or ATG2B) to mediate autophagosome assembly. Regulates ATP2A2 activity to control ER-isolation membrane contacts for autophagosome formation. In addition to autophagy, involved in other processes in which phospholipid scramblase activity is required. Modulates ER contacts with lipid droplets, mitochondria and endosomes. Plays an essential role in formation of cell junctions. Upon stress such as bacterial and viral infection, promotes formation of cytoplasmic vacuoles followed by cell death. Involved in the cytoplasmic vacuolization of acinar cells during the early stage of acute pancreatitis. The sequence is that of Vacuole membrane protein 1 from Bos taurus (Bovine).